The sequence spans 524 residues: Leucine-rich repeat-containing protein 1 (524 aa).

17 LRR repeats span residues 11-34 (NRHVESIDKRHCSLVYVPEEIYRY), 35-58 (ARSLEELLLDANQLRELPEQFFQL), 60-81 (KLRKLGLSDNEIQRLPPEIANF), 83-105 (QLVELDVSRNEIPEIPESISFCK), 107-126 (LQVADFSGNPLTRLPESFPE), 127-149 (LQNLTCLSVNDISLQSLPENIGN), 150-172 (LYNLASLELRENLLTYLPDSLTQ), 173-196 (LRRLEELDLGNNEIYNLPESIGAL), 198-218 (HLKDLWLDGNQLSELPQEIGN), 219-242 (LKNLLCLDVSENRLERLPEEISGL), 244-264 (SLTDLVISQNLLETIPDGIGK), 265-288 (LKKLSILKVDQNRLTQLPEAVGEC), 290-310 (SLTELVLTENQLLTLPKSIGK), 311-334 (LKKLSNLNADRNKLVSLPKEIGGC), 336-356 (SLTVFCVRDNRLTRIPAEVSQ), 357-380 (ATELHVLDVAGNRLLHLPLSLTAL), and 382-405 (LKALWLSDNQSQPLLTFQTDTDYT). T480 bears the Phosphothreonine mark. A coiled-coil region spans residues 484–512 (GELKHMKKTVENLRNDMNAAKGLDSNKNE).

Interacts with DLG1 and DLG4. May form a complex with DLG1 and ERBIN, where interaction between LRRC1 and ERBIN is indirect. In terms of tissue distribution, expressed strongly in testis and placenta, followed by heart, lung, kidney, thyroid, trachea, colon, prostate and pancreas.

It localises to the cytoplasm. Its subcellular location is the membrane. The sequence is that of Leucine-rich repeat-containing protein 1 (LRRC1) from Homo sapiens (Human).